Here is a 95-residue protein sequence, read N- to C-terminus: RING finger protein Z (95 aa).

Low complexity predominate over residues 1-16 (MGNSKSKSNPSSSSES). Residues 1–23 (MGNSKSKSNPSSSSESQKGAPTV) form a disordered region. Residue G2 is the site of N-myristoyl glycine; by host attachment. The RING-type; atypical zinc finger occupies 40-76 (CKCCWFADKNLIKCSDHYLCLRCLNVMLKNSDLCNIC). The short motif at 90 to 93 (PSAP) is the PTAP/PSAP motif element.

It belongs to the arenaviridae Z protein family. In terms of assembly, interacts with protein NP; this interaction probably directs the encapsidated genome to budding sites. Interacts (via RING domain) with polymerase L; this interaction inhibits viral transcription and replication, Z partially blocks the product exit tunnel for the releasing nascent RNA product. Interacts with the glycoprotein complex; this interaction plays a role in virion budding. Interacts with host eIF4E; this interaction results in eIF4E reduced affinity for its substrate, the 5'-m7 G cap structure. Interacts (via late-budding domain) with host TSG101; this interaction is essential for budding and release of viral particles. Interacts with host RPLP0; this interaction may serve to load ribosome-like particles inside the virion. Interacts with host PML; this interaction induces PML bodies redistribution in the cytoplasm upon viral infection. In terms of processing, myristoylation is required for the role of RING finger protein Z in assembly and budding.

Its subcellular location is the virion. The protein localises to the host cytoplasm. The protein resides in the host perinuclear region. It is found in the host cell membrane. Plays a crucial role in virion assembly and budding. Expressed late in the virus life cycle, it acts as an inhibitor of viral transcription and RNA synthesis by interacting with the viral polymerase L. Presumably recruits the NP encapsidated genome to cellular membranes at budding sites via direct interaction with NP. Plays critical roles in the final steps of viral release by interacting with host TSG101, a member of the vacuolar protein-sorting pathway and using other cellular host proteins involved in vesicle formation pathway. The budding of the virus progeny occurs after association of protein Z with the viral glycoprotein complex SSP-GP1-GP2 at the cell periphery, step that requires myristoylation of protein Z. Also selectively represses protein production by associating with host eIF4E. In cell-based minigenome assay, has an inhibitory effect on the ribonucleoprotein machinery (vRNP), which is responsible for the replication and transcription of the viral genome. In Guanarito mammarenavirus (isolate Human/Venezuela/NH-95551/1990) (GTOV), this protein is RING finger protein Z.